Consider the following 1074-residue polypeptide: Chitin synthase 2 (1074 aa).

Disordered stretches follow at residues 1 to 32, 56 to 179, and 209 to 255; these read MSHYHRQGGPGQPHDSYEDQQQPYYTDQAHSG, QAAP…PSQH, and RSDS…PYNN. Residues 19–29 show a composition bias toward polar residues; that stretch reads DQQQPYYTDQA. A compositionally biased stretch (low complexity) spans 68 to 80; sequence RIRSNSSGSRSVS. Residues asparagine 72 and asparagine 97 are each glycosylated (N-linked (GlcNAc...) asparagine). A compositionally biased stretch (polar residues) spans 85-119; the sequence is AYTNQGIPPVPSNLSAARQRSDPSQALPPSSSSYA. Residues 129 to 143 are compositionally biased toward low complexity; it reads SSHRNAPNAPNSNHP. An N-linked (GlcNAc...) asparagine glycan is attached at asparagine 149. A glycan (N-linked (GlcNAc...) asparagine) is linked at asparagine 289. The next 8 helical transmembrane spans lie at 608–628, 742–762, 779–799, 817–837, 867–887, 891–911, 1001–1021, and 1048–1068; these read VFGFISVLPGAFSAYRYKALL, LVLLVFSWFGIANFFLAFYFL, GAAIVEIFQNIFIAMVIVVLV, IIIFALIMGLALYAAGYTIYL, IVISLAATYVMWLLCSLLHLE, MLTSFVQYLFLTPTYVIILSM, LVLIWMCTNALVVIIFTSTWW, and IFWSTAGLSAVRFVGSITFLL.

It belongs to the chitin synthase family. Class II subfamily.

It is found in the cell membrane. The protein resides in the cytoplasmic vesicle membrane. The catalysed reaction is [(1-&gt;4)-N-acetyl-beta-D-glucosaminyl](n) + UDP-N-acetyl-alpha-D-glucosamine = [(1-&gt;4)-N-acetyl-beta-D-glucosaminyl](n+1) + UDP + H(+). Functionally, polymerizes chitin, a structural polymer of the cell wall and septum, by transferring the sugar moiety of UDP-GlcNAc to the non-reducing end of the growing chitin polymer. The sequence is that of Chitin synthase 2 (CHS2) from Mycosarcoma maydis (Corn smut fungus).